Consider the following 158-residue polypeptide: Non-specific lipid transfer protein GPI-anchored 29 (158 aa).

The signal sequence occupies residues 1 to 24 (MAYFSTATSLLLLVLSVSSPYVHG). 4 cysteine pairs are disulfide-bonded: Cys28/Cys71, Cys38/Cys55, Cys56/Cys95, and Cys69/Cys105. Asn84 carries an N-linked (GlcNAc...) asparagine glycan. A lipid anchor (GPI-anchor amidated serine) is attached at Ser134. The propeptide at 135-158 (KGNSLIPISGFSFVIVTALAMFRI) is removed in mature form.

This sequence belongs to the plant LTP family. As to expression, confined to the ovaries of the inflorescence.

The protein localises to the secreted. Its subcellular location is the cell membrane. Its function is as follows. Probable lipid transfer protein. The polypeptide is Non-specific lipid transfer protein GPI-anchored 29 (Arabidopsis thaliana (Mouse-ear cress)).